Consider the following 384-residue polypeptide: Cyclohexane-1-carbonyl-CoA dehydrogenase (384 aa).

This sequence belongs to the acyl-CoA dehydrogenase family. As to quaternary structure, homotetramer. The cofactor is FAD.

The catalysed reaction is cyclohexane-1-carbonyl-CoA + oxidized [electron-transfer flavoprotein] + H(+) = cyclohex-1-ene-1-carbonyl-CoA + reduced [electron-transfer flavoprotein]. In terms of biological role, mediates the conversion of cyclohexane-1-carbonyl-CoA (ChCoA) into cyclohex-1-ene-1-carbonyl-CoA in biosynthesis of cyclohexane-1-carboxylate, a by-product produced during fermentation of benzoate and crotonate to acetate. The sequence is that of Cyclohexane-1-carbonyl-CoA dehydrogenase from Syntrophus aciditrophicus (strain SB).